The primary structure comprises 357 residues: Membrane-bound lytic murein transglycosylase C (357 aa).

An N-terminal signal peptide occupies residues 1–16; it reads MKKILPLVIIAPLLIS. Cys-17 carries the N-palmitoyl cysteine lipid modification. Cys-17 is lipidated: S-diacylglycerol cysteine.

Belongs to the transglycosylase Slt family.

The protein localises to the cell outer membrane. It carries out the reaction Exolytic cleavage of the (1-&gt;4)-beta-glycosidic linkage between N-acetylmuramic acid (MurNAc) and N-acetylglucosamine (GlcNAc) residues in peptidoglycan, from either the reducing or the non-reducing ends of the peptidoglycan chains, with concomitant formation of a 1,6-anhydrobond in the MurNAc residue.. Functionally, murein-degrading enzyme. May play a role in recycling of muropeptides during cell elongation and/or cell division. This is Membrane-bound lytic murein transglycosylase C from Sodalis glossinidius (strain morsitans).